The primary structure comprises 160 residues: SsrA-binding protein (160 aa).

It belongs to the SmpB family.

The protein resides in the cytoplasm. Functionally, required for rescue of stalled ribosomes mediated by trans-translation. Binds to transfer-messenger RNA (tmRNA), required for stable association of tmRNA with ribosomes. tmRNA and SmpB together mimic tRNA shape, replacing the anticodon stem-loop with SmpB. tmRNA is encoded by the ssrA gene; the 2 termini fold to resemble tRNA(Ala) and it encodes a 'tag peptide', a short internal open reading frame. During trans-translation Ala-aminoacylated tmRNA acts like a tRNA, entering the A-site of stalled ribosomes, displacing the stalled mRNA. The ribosome then switches to translate the ORF on the tmRNA; the nascent peptide is terminated with the 'tag peptide' encoded by the tmRNA and targeted for degradation. The ribosome is freed to recommence translation, which seems to be the essential function of trans-translation. The sequence is that of SsrA-binding protein from Haemophilus ducreyi (strain 35000HP / ATCC 700724).